The primary structure comprises 144 residues: Galectin a (144 aa).

The Galectin domain occupies 1-138 (DHIDLEFDVG…DAVLRKLCVV (138 aa)).

As to quaternary structure, tetramer.

Functionally, lectin that binds beta-galactoside and a wide array of complex carbohydrates. The chain is Galectin a from Aplysina lactuca (Marine sponge).